Reading from the N-terminus, the 391-residue chain is MSRVGVVLLNLGGPERIQDVGPFLYNLFADPEIIRLPSPALQKPLAWLISTLRSGKSQEAYRSIGGGSPLRRITEQQARELQSLLRQRGIDATSYVAMRYWHPFTESAVADIKADGMDEVVVLPLYPHFSISTSGSSFRELQRLRQADPAFEKLPIRCIRSWFDHPGYVKAMAELIAAEVRNSDDPTKAHVFFSAHGVPKSYVEEAGDPYQKEIETCTGLIMKELAVQMGHDNPFTLAYQSRVGPVEWLKPYTEEALEELGQAKTNDLVVVPISFVSEHIETLEEIDIEYRELATEAGVVNFRRVRALDTYAPFIEGLADLVATSLQGPEVSLDAAAELPNKVKLYPQEKWEWGWNNSSEVWNGRLAMVGFSAFLLELISGQGPLHALGLL.

Positions 196 and 281 each coordinate Fe cation.

It belongs to the ferrochelatase family.

Its subcellular location is the cytoplasm. The enzyme catalyses heme b + 2 H(+) = protoporphyrin IX + Fe(2+). The protein operates within porphyrin-containing compound metabolism; protoheme biosynthesis; protoheme from protoporphyrin-IX: step 1/1. Its function is as follows. Catalyzes the ferrous insertion into protoporphyrin IX. This is Ferrochelatase from Synechococcus sp. (strain CC9605).